The primary structure comprises 83 residues: Three-finger toxin MALT0058C (83 aa).

The first 21 residues, 1–21 (MKTLLLTLVVVTIVCLDFGHT), serve as a signal peptide directing secretion. 4 cysteine pairs are disulfide-bonded: Cys-24/Cys-45, Cys-38/Cys-62, Cys-64/Cys-75, and Cys-76/Cys-81.

It belongs to the three-finger toxin family. Short-chain subfamily. Type I alpha-neurotoxin sub-subfamily. Expressed by the venom gland.

It is found in the secreted. Binds to muscle nicotinic acetylcholine receptor (nAChR) and inhibits acetylcholine from binding to the receptor, thereby impairing neuromuscular transmission. This chain is Three-finger toxin MALT0058C, found in Micrurus altirostris (Uruguayan coral snake).